The sequence spans 342 residues: Ribosomal RNA small subunit methyltransferase C (342 aa).

The protein belongs to the methyltransferase superfamily. RsmC family. As to quaternary structure, monomer.

It is found in the cytoplasm. The catalysed reaction is guanosine(1207) in 16S rRNA + S-adenosyl-L-methionine = N(2)-methylguanosine(1207) in 16S rRNA + S-adenosyl-L-homocysteine + H(+). In terms of biological role, specifically methylates the guanine in position 1207 of 16S rRNA in the 30S particle. In Cronobacter sakazakii (strain ATCC BAA-894) (Enterobacter sakazakii), this protein is Ribosomal RNA small subunit methyltransferase C.